The chain runs to 391 residues: Uroporphyrinogen decarboxylase, chloroplastic (391 aa).

Substrate is bound by residues 71-75 (RQAGR), phenylalanine 90, serine 120, aspartate 121, tyrosine 198, serine 253, and histidine 368.

This sequence belongs to the uroporphyrinogen decarboxylase family. Homodimer.

Its subcellular location is the plastid. The protein resides in the chloroplast. The catalysed reaction is uroporphyrinogen III + 4 H(+) = coproporphyrinogen III + 4 CO2. It functions in the pathway porphyrin-containing compound metabolism; protoporphyrin-IX biosynthesis; coproporphyrinogen-III from 5-aminolevulinate: step 4/4. Catalyzes the decarboxylation of four acetate groups of uroporphyrinogen-III to yield coproporphyrinogen-III. The chain is Uroporphyrinogen decarboxylase, chloroplastic (DCUP) from Nicotiana tabacum (Common tobacco).